Consider the following 761-residue polypeptide: Mitochondrial intermediate peptidase (761 aa).

Residues Met1–Asn37 constitute a mitochondrion transit peptide. His547 serves as a coordination point for Zn(2+). Glu548 is an active-site residue. Zn(2+) contacts are provided by His551 and His554.

Belongs to the peptidase M3 family. It depends on Zn(2+) as a cofactor.

It is found in the mitochondrion matrix. The enzyme catalyses Release of an N-terminal octapeptide as second stage of processing of some proteins imported into the mitochondrion.. Its function is as follows. Cleaves proteins, imported into the mitochondrion, to their mature size. While most mitochondrial precursor proteins are processed to the mature form in one step by mitochondrial processing peptidase (MPP), the sequential cleavage by MIP of an octapeptide after initial processing by MPP is a required step for a subgroup of nuclear-encoded precursor proteins destined for the matrix or the inner membrane. This chain is Mitochondrial intermediate peptidase (OCT1), found in Candida glabrata (strain ATCC 2001 / BCRC 20586 / JCM 3761 / NBRC 0622 / NRRL Y-65 / CBS 138) (Yeast).